The following is a 142-amino-acid chain: uncharacterized protein (142 aa).

The N-acetyltransferase domain maps to 1–120 (MADKFDANDE…TILKWEKNMD (120 aa)).

This sequence belongs to the acetyltransferase family.

This is an uncharacterized protein from Streptococcus pyogenes serotype M1.